A 301-amino-acid polypeptide reads, in one-letter code: Polyamine aminopropyltransferase (301 aa).

One can recognise a PABS domain in the interval 4–240; that stretch reads WHWLLEWQTP…GLWGFVYGGV (237 aa). Gln33 lines the S-methyl-5'-thioadenosine pocket. The spermidine site is built by His64 and Glu89. S-methyl-5'-thioadenosine-binding positions include Asp109 and 141-142; that span reads DG. Asp159 acts as the Proton acceptor in catalysis.

It belongs to the spermidine/spermine synthase family. In terms of assembly, homodimer or homotetramer.

It localises to the cytoplasm. It catalyses the reaction S-adenosyl 3-(methylsulfanyl)propylamine + putrescine = S-methyl-5'-thioadenosine + spermidine + H(+). The protein operates within amine and polyamine biosynthesis; spermidine biosynthesis; spermidine from putrescine: step 1/1. Catalyzes the irreversible transfer of a propylamine group from the amino donor S-adenosylmethioninamine (decarboxy-AdoMet) to putrescine (1,4-diaminobutane) to yield spermidine. The chain is Polyamine aminopropyltransferase from Saccharolobus islandicus (strain L.S.2.15 / Lassen #1) (Sulfolobus islandicus).